The following is a 438-amino-acid chain: Chromosomal replication initiator protein DnaA (438 aa).

A domain I, interacts with DnaA modulators region spans residues 1–71 (MTTKEFLTII…CFEIYDGSKP (71 aa)). The segment at 71-100 (PTIEIKLSNEKKSKKEILKEQTQNESTEST) is domain II. The domain III, AAA+ region stretch occupies residues 101 to 315 (ILNPSYTFDS…GVLIRINASA (215 aa)). ATP contacts are provided by glycine 145, glycine 147, lysine 148, and threonine 149. Residues 316-438 (SLLNQEITLP…LKNKIINSRE (123 aa)) are domain IV, binds dsDNA.

It belongs to the DnaA family. As to quaternary structure, oligomerizes as a right-handed, spiral filament on DNA at oriC.

Its subcellular location is the cytoplasm. In terms of biological role, plays an essential role in the initiation and regulation of chromosomal replication. ATP-DnaA binds to the origin of replication (oriC) to initiate formation of the DNA replication initiation complex once per cell cycle. Binds the DnaA box (a 9 base pair repeat at the origin) and separates the double-stranded (ds)DNA. Forms a right-handed helical filament on oriC DNA; dsDNA binds to the exterior of the filament while single-stranded (ss)DNA is stabiized in the filament's interior. The ATP-DnaA-oriC complex binds and stabilizes one strand of the AT-rich DNA unwinding element (DUE), permitting loading of DNA polymerase. After initiation quickly degrades to an ADP-DnaA complex that is not apt for DNA replication. Binds acidic phospholipids. In Aliarcobacter butzleri (strain RM4018) (Arcobacter butzleri), this protein is Chromosomal replication initiator protein DnaA.